A 241-amino-acid chain; its full sequence is Small ribosomal subunit protein uS2 (241 aa).

The protein belongs to the universal ribosomal protein uS2 family.

The sequence is that of Small ribosomal subunit protein uS2 from Shigella flexneri serotype 5b (strain 8401).